The primary structure comprises 565 residues: Membrane protein insertase YidC (565 aa).

The next 6 membrane-spanning stretches (helical) occupy residues 6 to 26 (VLLIFSWLTVATLLWMDWSKN), 348 to 368 (LMALIGQGLFWILSHLNSLLH), 370 to 390 (WGWAIVGLVVLLRIAMYPLSA), 437 to 457 (GGCFPILIQMPIFFALYWVLV), 479 to 499 (PYFILPLLNIVIMWATQKLTP), and 516 to 536 (PLIFGVMMAFVPSGLALYWVI).

The protein belongs to the OXA1/ALB3/YidC family. Type 1 subfamily. In terms of assembly, interacts with the Sec translocase complex via SecD. Specifically interacts with transmembrane segments of nascent integral membrane proteins during membrane integration.

It is found in the cell inner membrane. Functionally, required for the insertion and/or proper folding and/or complex formation of integral membrane proteins into the membrane. Involved in integration of membrane proteins that insert both dependently and independently of the Sec translocase complex, as well as at least some lipoproteins. Aids folding of multispanning membrane proteins. The sequence is that of Membrane protein insertase YidC from Xylella fastidiosa (strain M23).